Reading from the N-terminus, the 623-residue chain is MLNDVVRDAEGEKVFLLGNEAIARGAIEAGIDVFAAYPGTPSSEIADTLSDACRLLRGKMDFYMEYSANEKVAFEVAVGASLAGKRAMATMKHVGVNVAADPLFSFAYVGARGGFVLVTADDPSMHSSQNEQDNRWYGKAAKLPVVEPSSVQEAKDYAKLCFDLSEKFGLPMILRSYTRLSHASGVVELGKIPEKEFSRVEWERHPETDVVLPAHARKLKPILLEKLEKIERYFNSSEMNWVDEGDGDVGIIACGLSYAYTKEALENLNLNLPVLKLSSMHPLPERLIENFVSQMKKVIVVEEVDPFVELHVRAMGLAEVYGKMNGYMPMNYEYNVGRVETGIAKALGIKPSRDYEGIVAESQKLAAKAPPRPPVLCPGCPHSASFYAIRRVVDELGDAALPSDIGCYTLGINKPLEGVDITICMGASVGVSNGLAHVLNNKIIATIGDSTFIHAGIPPLINAVYNHADFVLVILDNSTTGMTGHQPHPGTGFRGCGEAGKAVRIEDIVRGCGVEFVEVVNPYNVRKMVDVLRRALNHDGVAVVIARQPCAILWSRARRREGKIVTYKVTEDCTLCMECVNTFACPALIFDGEKVSIDQSLCVGCAVCAKICPNRAIKPAKSN.

[4Fe-4S] cluster-binding residues include Cys573, Cys576, Cys579, Cys585, Cys602, Cys605, Cys608, and Cys612. One can recognise a 4Fe-4S ferredoxin-type domain in the interval Glu593–Ser622.

In terms of assembly, heterodimer of the IorA and IorB subunits. The cofactor is [4Fe-4S] cluster.

The catalysed reaction is indole-3-pyruvate + 2 oxidized [2Fe-2S]-[ferredoxin] + CoA = (indol-3-yl)acetyl-CoA + 2 reduced [2Fe-2S]-[ferredoxin] + CO2 + H(+). Catalyzes the ferredoxin-dependent oxidative decarboxylation of arylpyruvates. The protein is Indolepyruvate oxidoreductase subunit IorA (iorA) of Archaeoglobus fulgidus (strain ATCC 49558 / DSM 4304 / JCM 9628 / NBRC 100126 / VC-16).